Consider the following 2713-residue polypeptide: Histone-lysine N-methyltransferase 2B (2713 aa).

The segment covering 1 to 11 (MAAAAGGGSCP) has biased composition (gly residues). Disordered stretches follow at residues 1 to 65 (MAAA…GEDT), 82 to 524 (RLWA…PTVV), and 542 to 783 (VSAR…ARVA). Position 2 is an N-acetylalanine (alanine 2). Positions 12–24 (GPGSARGRFPGRP) are enriched in low complexity. The short motif at 17-36 (RGRFPGRPRGSGGGGGRGGR) is the Menin-binding motif (MBM) element. Gly residues-rich tracts occupy residues 25–38 (RGSG…GRGN) and 49–60 (RGGGAAGPGGAE). A DNA-binding region (a.T hook 1) is located at residues 37–44 (GNGAERVR). Residues 109-123 (PEEESSDGESEEEEF) are compositionally biased toward acidic residues. The a.T hook 2 DNA-binding region spans 110-117 (EEESSDGE). 3 positions are modified to phosphoserine: serine 113, serine 114, and serine 118. A compositionally biased stretch (basic residues) spans 144–158 (QRGRAPRGRGRKHKT). Basic and acidic residues predominate over residues 340–360 (PQRKDGDEPERGSCRKKQEQK). A DNA-binding region (a.T hook 3) is located at residues 357–365 (QEQKLEEEE). Residues 361 to 393 (LEEEEEEEEKEGEEKEEKDDNEDNNKQEEEEET) show a composition bias toward acidic residues. Basic and acidic residues predominate over residues 394-412 (ERAVAEEEAMLAKEKEEAK). The span at 414–460 (PSPPLTPPVPSPPPPLPPPSTSPPPPASPLPPPVSPPPPLSPPPYPA) shows a compositional bias: pro residues. Residues 501–517 (GTLSPTPNPSTTTGSPL) are compositionally biased toward low complexity. Positions 555–566 (RFMDEDPPKPPK) are enriched in basic and acidic residues. Residues 577–605 (ATSPPAPQEPVPVSSPPRVPTPPSTPVPL) show a composition bias toward pro residues. The segment covering 606–617 (PEKRRSILREPT) has biased composition (basic and acidic residues). The segment covering 627–645 (LPPPPPAPPPAPSPPPAPA) has biased composition (pro residues). 3 stretches are compositionally biased toward low complexity: residues 646-657 (TPSRRPLLLRAP), 715-728 (VPVV…EVPP), and 738-756 (QQLQ…LLPQ). Positions 757–774 (ALPPQQPQAQPPPSPQHT) are enriched in pro residues. Lysine 810 participates in a covalent cross-link: Glycyl lysine isopeptide (Lys-Gly) (interchain with G-Cter in SUMO2). A phosphoserine mark is found at serine 826, serine 849, and serine 866. 2 disordered regions span residues 831 to 872 (TEEA…QGPR) and 899 to 964 (SALP…HHGK). A compositionally biased stretch (basic and acidic residues) spans 841 to 862 (TPDRGCVRSEDESMEAKRDRAS). Residues 912-922 (EDTSSASETES) show a composition bias toward low complexity. A Phosphoserine modification is found at serine 941. Positions 953–964 (TPRRSLPSHHGK) are enriched in basic residues. A CXXC-type zinc finger spans residues 964 to 1011 (KKMRMARCGHCRGCLRVQDCGSCVNCLDKPKFGGPNTKKQCCVYRKCD). Zn(2+) contacts are provided by cysteine 971, cysteine 974, cysteine 977, cysteine 983, cysteine 986, cysteine 989, cysteine 1005, and cysteine 1010. 2 disordered regions span residues 1032–1076 (LLPW…DSLL) and 1088–1138 (QRPS…LQPV). A phosphoserine mark is found at serine 1037, serine 1040, serine 1098, and serine 1101. Residue lysine 1142 forms a Glycyl lysine isopeptide (Lys-Gly) (interchain with G-Cter in SUMO2) linkage. 3 PHD-type zinc fingers span residues 1207–1258 (PMVC…CKFC), 1255–1309 (CKFC…CVRC), and 1341–1402 (GNYC…CAGA). The Bromo domain occupies 1410–1510 (ALSGALQGGL…GLLLKLLESA (101 aa)). The disordered stretch occupies residues 1550–1572 (RQQESETPESGQPPGDPSAAFQS). The C2HC pre-PHD-type zinc finger occupies 1584 to 1624 (PRQCALCLKYGDADSKEAGRLLYIGQNEWTHVNCAIWSAEV). The segment at 1645-1692 (MRCELCLKPGATVGCCLSSCLSNFHFMCARASYCIFQDDKKVFCQKHT) adopts a PHD-type 4 zinc-finger fold. The 57-residue stretch at 1733 to 1789 (VINVLIGSIRINSLGTLSDLSDCEGRLFPIGYQCSRLYWSTVDARRRCWYRCRILEY) folds into the FYR N-terminal domain. Over residues 1808–1821 (QTIVHSPTPSSDTD) the composition is skewed to polar residues. 5 disordered regions span residues 1808-1973 (QTIV…GPDF), 2056-2104 (QLDG…PPED), 2116-2160 (NLGG…RTFA), 2279-2356 (VSTF…RCPL), and 2382-2408 (YSAG…PKRV). 2 stretches are compositionally biased toward low complexity: residues 1872 to 1890 (PLGG…PSSL) and 1923 to 1933 (RRTSSPLRTSP). Phosphoserine occurs at positions 1926 and 1932. Positions 1939–1950 (LSTSVTALTPTS) are enriched in polar residues. Over residues 2058–2068 (DGVDDGTDSEA) the composition is skewed to acidic residues. A phosphothreonine mark is found at threonine 2064 and threonine 2079. The span at 2084–2093 (PGVGRGGVLG) shows a compositional bias: gly residues. Residues 2140–2153 (NGSQPPQSLSTSPA) show a composition bias toward polar residues. Residues serine 2286 and serine 2346 each carry the phosphoserine modification. Residues 2409–2490 (GPHLRFEISS…QRCQHYKFRY (82 aa)) enclose the FYR C-terminal domain. The short motif at 2506 to 2511 (GAARAE) is the WDR5 interaction motif (WIN) element. The 117-residue stretch at 2573-2689 (EAVGVYRSAI…RGEELTYDYK (117 aa)) folds into the SET domain. Residues histidine 2583, arginine 2585, tyrosine 2627, and 2650–2651 (NH) each bind S-adenosyl-L-methionine. 2 residues coordinate Zn(2+): cysteine 2653 and cysteine 2701. The Post-SET domain occupies 2697 to 2713 (NKLPCNCGAKRCRRFLN). Position 2702 (asparagine 2702) interacts with S-adenosyl-L-methionine. Residues cysteine 2703 and cysteine 2708 each contribute to the Zn(2+) site.

The protein belongs to the class V-like SAM-binding methyltransferase superfamily. Histone-lysine methyltransferase family. TRX/MLL subfamily. In terms of assembly, component of the menin-associated histone methyltransferase complex, at least composed of KMT2B/MLL4, ASH2L, RBBP5, WDR5, DPY30, MEN1; the complex interacts with POLR2A and POLR2B via MEN1. Interacts with NFE2. Interacts with KDM6B. Interacts (via WIN motif) with WDR5. Interacts (via MBM motif) with MEN1.

The protein resides in the nucleus. The enzyme catalyses L-lysyl(4)-[histone H3] + S-adenosyl-L-methionine = N(6)-methyl-L-lysyl(4)-[histone H3] + S-adenosyl-L-homocysteine + H(+). It carries out the reaction N(6)-methyl-L-lysyl(4)-[histone H3] + S-adenosyl-L-methionine = N(6),N(6)-dimethyl-L-lysyl(4)-[histone H3] + S-adenosyl-L-homocysteine + H(+). Functionally, histone methyltransferase that catalyzes methyl group transfer from S-adenosyl-L-methionine to the epsilon-amino group of 'Lys-4' of histone H3 (H3K4) via a non-processive mechanism. Part of chromatin remodeling machinery predominantly forms H3K4me1 and H3K4me2 methylation marks at active chromatin sites where transcription and DNA repair take place. Likely plays a redundant role with KMT2C in enriching H3K4me1 marks on primed and active enhancer elements. Plays a central role in beta-globin locus transcription regulation by being recruited by NFE2. Plays an important role in controlling bulk H3K4me during oocyte growth and preimplantation development. Required during the transcriptionally active period of oocyte growth for the establishment and/or maintenance of bulk H3K4 trimethylation (H3K4me3), global transcriptional silencing that preceeds resumption of meiosis, oocyte survival and normal zygotic genome activation. The protein is Histone-lysine N-methyltransferase 2B (Kmt2b) of Mus musculus (Mouse).